Consider the following 298-residue polypeptide: ATP-dependent Clp protease proteolytic subunit 5, chloroplastic (298 aa).

The N-terminal 100 residues, 1-100 (MAHACVSTSA…SSPYFPAYAQ (100 aa)), are a transit peptide targeting the chloroplast. G101 is modified (N-acetylglycine). S193 serves as the catalytic Nucleophile. H218 is a catalytic residue.

Belongs to the peptidase S14 family. In terms of assembly, component of the chloroplastic Clp protease core complex which consist of at least 16 proteins: CLPP4 (3 copies), CLPP5 (3 copies), CLPR4 (2 copies), ClpP1 (1 copy), CLPP6 (1 copy), CLPR2 (1 copy), CLPT1 (1 copy), CLPT2 (1 copy) and 3 copies of CLPP3 and/or CLPR1 and/or CLPR3. The core complex is organized in two heptameric rings, one containing CLPP3,4,5,6 in a 1:2:3:1 ratio and the other CLPP1 and CLPR1,2,3,4 in a 3:1:1:1:1 ratio. Interacts with CHIP. Post-translationally, ubiquitinated in vitro by CHIP. Mostly expressed in leaves. Also detected in stems, and to a lower extent, in roots (at protein level).

Its subcellular location is the plastid. The protein localises to the chloroplast stroma. The catalysed reaction is Hydrolysis of proteins to small peptides in the presence of ATP and magnesium. alpha-casein is the usual test substrate. In the absence of ATP, only oligopeptides shorter than five residues are hydrolyzed (such as succinyl-Leu-Tyr-|-NHMec, and Leu-Tyr-Leu-|-Tyr-Trp, in which cleavage of the -Tyr-|-Leu- and -Tyr-|-Trp bonds also occurs).. In terms of biological role, cleaves peptides in various proteins in a process that requires ATP hydrolysis. Has a chymotrypsin-like activity. Plays a major role in the degradation of misfolded proteins. This Arabidopsis thaliana (Mouse-ear cress) protein is ATP-dependent Clp protease proteolytic subunit 5, chloroplastic.